Consider the following 487-residue polypeptide: MGSRLHVQEIKKGPPLPFKDDIRAFTREYAESLDAQDPLRHFRDEFIIPSKKDLKRKTLNANENIEDSSDPRSIYLCGNSLGLQPRNTRKYLEHYLRTWAIKGVTGHFTPHDDQLLPPFVDVDDAGAKLMAPIVGALESEVAVMGTLTANLHFLMASFYQPTKEKYKIILEGKAFPSDHYAVESQIQHHNLDPKDAMVLIELENLDRPILDTEKILRVIDEHASSTALILLSGIQFYTGQYFDIEKITAYAHSKGIIIGWDCAHAAGNVELKLHDWNVDFAAWCNYKYLNSGPGGMAGLFVHENHGRVDMTKVGSKDEPFRPRLSGWWGDDKKTRFRMENRFVPQPGAAGFQLSNPSVLDMNAVAASLEIFNRTSMAEIRKKSLDLTGYLEHLLLKYPLDAAPEDKPFSIITPSNPAERGAQLSLRLGPGLLDNVLEVLEENGVVIDERKPDVIRVAPAPLYNTYADVWQFCQIFFDACQKAVRARK.

Pyridoxal 5'-phosphate is bound by residues Leu-147, Thr-148, 175-178, Ser-232, Asp-261, His-264, and Tyr-286; that span reads FPSD. The residue at position 287 (Lys-287) is an N6-(pyridoxal phosphate)lysine. Pyridoxal 5'-phosphate is bound by residues Trp-327 and Asn-355.

The protein belongs to the kynureninase family. Homodimer. Pyridoxal 5'-phosphate serves as cofactor.

Its subcellular location is the cytoplasm. The catalysed reaction is L-kynurenine + H2O = anthranilate + L-alanine + H(+). It carries out the reaction 3-hydroxy-L-kynurenine + H2O = 3-hydroxyanthranilate + L-alanine + H(+). It functions in the pathway amino-acid degradation; L-kynurenine degradation; L-alanine and anthranilate from L-kynurenine: step 1/1. The protein operates within cofactor biosynthesis; NAD(+) biosynthesis; quinolinate from L-kynurenine: step 2/3. Functionally, catalyzes the cleavage of L-kynurenine (L-Kyn) and L-3-hydroxykynurenine (L-3OHKyn) into anthranilic acid (AA) and 3-hydroxyanthranilic acid (3-OHAA), respectively. The polypeptide is Kynureninase 1 (bna5-1) (Aspergillus oryzae (strain ATCC 42149 / RIB 40) (Yellow koji mold)).